Here is a 160-residue protein sequence, read N- to C-terminus: Serine-protein kinase RsbW (160 aa).

This sequence belongs to the anti-sigma-factor family.

It carries out the reaction L-seryl-[protein] + ATP = O-phospho-L-seryl-[protein] + ADP + H(+). The enzyme catalyses L-threonyl-[protein] + ATP = O-phospho-L-threonyl-[protein] + ADP + H(+). Its function is as follows. Negative regulator of sigma-B activity. Phosphorylates and inactivates its specific antagonist protein, RsbV. Upon phosphorylation of RsbV, RsbW is released and binds to sigma-B, thereby blocking its ability to form an RNA polymerase holoenzyme (E-sigma-B). This Bacillus licheniformis protein is Serine-protein kinase RsbW.